The sequence spans 218 residues: Large ribosomal subunit protein uL3 (218 aa).

The segment at 127–167 (GFSRGPMSHGSKNHRLPGSIGAGTTPGRVYPGKRMAGRMGG) is disordered.

The protein belongs to the universal ribosomal protein uL3 family. In terms of assembly, part of the 50S ribosomal subunit. Forms a cluster with proteins L14 and L19.

Its function is as follows. One of the primary rRNA binding proteins, it binds directly near the 3'-end of the 23S rRNA, where it nucleates assembly of the 50S subunit. The protein is Large ribosomal subunit protein uL3 of Prochlorococcus marinus (strain NATL1A).